We begin with the raw amino-acid sequence, 626 residues long: Probable serine/threonine-protein kinase CCRP1 (626 aa).

One can recognise a Protein kinase domain in the interval 36–291; sequence YSKGRMLGKG…LDEILQHPFL (256 aa). Residues 42–50 and Lys65 each bind ATP; that span reads LGKGGFAKC. Ser71 carries the post-translational modification Phosphoserine. Residue Asp159 is the Proton acceptor of the active site. The interval 399–433 is disordered; it reads NFTKTGSWQSNLNGTQSVKGSSRPQTVQQKGDLKS. Residues 400–427 show a composition bias toward polar residues; the sequence is FTKTGSWQSNLNGTQSVKGSSRPQTVQQ. 2 POLO box domains span residues 471-554 and 574-626; these read WVKK…YLEG and YVKK…PISP.

It belongs to the protein kinase superfamily. Ser/Thr protein kinase family. CDC5/Polo subfamily. Embryo.

It carries out the reaction L-seryl-[protein] + ATP = O-phospho-L-seryl-[protein] + ADP + H(+). The enzyme catalyses L-threonyl-[protein] + ATP = O-phospho-L-threonyl-[protein] + ADP + H(+). In terms of biological role, may play a role in the division of some cell types. The protein is Probable serine/threonine-protein kinase CCRP1 (CCRP1) of Zea mays (Maize).